Here is a 747-residue protein sequence, read N- to C-terminus: Oxysterol-binding protein-related protein 11 (747 aa).

Met1 bears the N-acetylmethionine mark. Residues 1–50 are disordered; that stretch reads MQGGEPVSTMKVSESEGKLEGQATAVTPNKNSSCGGGISSSSSSRGGSAK. Ser15 carries the post-translational modification Phosphoserine. Thr27 carries the post-translational modification Phosphothreonine. A PH domain is found at 58–155; it reads MENVYGYLMK…WVSRLQICTQ (98 aa). Tyr62 bears the Phosphotyrosine mark. The segment at 158-188 is disordered; it reads TEAIGKNNPPLKSRSFSLASSSNSPISQRRP. Residues 170-184 show a composition bias toward low complexity; the sequence is SRSFSLASSSNSPIS. Ser172, Ser174, Ser177, Ser181, Ser184, and Ser189 each carry phosphoserine. Positions 689–713 are enriched in basic and acidic residues; sequence EIDKATEHKHTLEERQRTEERHRTE. A disordered region spans residues 689–714; that stretch reads EIDKATEHKHTLEERQRTEERHRTET.

Belongs to the OSBP family. As to quaternary structure, heterodimer with OSBPL9. As to expression, present at highest levels in ovary, testis, kidney, liver, stomach, brain, and adipose tissue. Strong expression (at protein level) in epithelial cells of kidney tubules, testicular tubules, caecum, and skin. Present at low levels in subcutaneous and visceral adipose tissue (at protein level).

It is found in the late endosome membrane. The protein resides in the golgi apparatus. It localises to the trans-Golgi network membrane. It carries out the reaction a 1,2-diacyl-sn-glycero-3-phospho-(1D-myo-inositol 4-phosphate)(out) + a 1,2-diacyl-sn-glycero-3-phospho-L-serine(in) = a 1,2-diacyl-sn-glycero-3-phospho-(1D-myo-inositol 4-phosphate)(in) + a 1,2-diacyl-sn-glycero-3-phospho-L-serine(out). Functionally, plays a role in regulating ADIPOQ and FABP4 levels in differentiating adipocytes and is also involved in regulation of adipocyte triglyceride storage. Weakly binds 25-hydroxycholesterol. Interacts with OSBPL9 to function as lipid transfer proteins. Together they form a heterodimer that localizes at the ER-trans-Golgi membrane contact sites, and exchanges phosphatidylserine (1,2-diacyl-sn-glycero-3-phospho-L-serine, PS) for phosphatidylinositol-4-phosphate (1,2-diacyl-sn-glycero-3-phospho-(1D-myo-inositol 4-phosphate), PI(4)P) between the two organelles, a step that is critical for sphingomyelin synthesis in the Golgi complex. The sequence is that of Oxysterol-binding protein-related protein 11 (OSBPL11) from Homo sapiens (Human).